The chain runs to 914 residues: Protein GAMETE EXPRESSED 2 (914 aa).

2 Filamin repeats span residues 249-382 (IGYC…IKEV) and 391-485 (ACSV…DVNV). A helical transmembrane segment spans residues 893 to 913 (LVVVPFSFFSIKLFSLLMVLI).

In terms of tissue distribution, in tricellular pollen, expressed in mature sperm cells but not in the vegetative cell. In bicellular pollen, detected in the progenitor generative cell. Detected in the egg cell within the female gametophyte.

It is found in the cell membrane. This Arabidopsis thaliana (Mouse-ear cress) protein is Protein GAMETE EXPRESSED 2 (GEX2).